The sequence spans 222 residues: Interleukin-12 subunit alpha (222 aa).

A signal peptide spans 1–25 (MCPPRGLLLVTILVLLNHLDHLSLA). 3 disulfides stabilise this stretch: Cys40–Cys113, Cys67–Cys199, and Cys88–Cys126. N-linked (GlcNAc...) asparagine glycosylation is found at Asn42, Asn96, Asn110, and Asn183.

It belongs to the IL-6 superfamily. In terms of assembly, heterodimer with IL12B; disulfide-linked. This heterodimer is known as interleukin IL-12. Heterodimer with EBI3/IL27B; not disulfide-linked. This heterodimer is known as interleukin IL-35. Interacts with NBR1; this interaction promotes IL-12 secretion.

It localises to the secreted. Its function is as follows. Heterodimerizes with IL12B to form the IL-12 cytokine or with EBI3/IL27B to form the IL-35 cytokine. IL-12 is primarily produced by professional antigen-presenting cells (APCs) such as B-cells and dendritic cells (DCs) as well as macrophages and granulocytes and regulates T-cell and natural killer-cell responses, induces the production of interferon-gamma (IFN-gamma), favors the differentiation of T-helper 1 (Th1) cells and is an important link between innate resistance and adaptive immunity. Mechanistically, exerts its biological effects through a receptor composed of IL12R1 and IL12R2 subunits. Binding to the receptor results in the rapid tyrosine phosphorylation of a number of cellular substrates including the JAK family kinases TYK2 and JAK2. In turn, recruited STAT4 gets phosphorylated and translocates to the nucleus where it regulates cytokine/growth factor responsive genes. As part of IL-35, plays essential roles in maintaining the immune homeostasis of the liver microenvironment and also functions as an immune-suppressive cytokine. Mediates biological events through unconventional receptors composed of IL12RB2 and gp130/IL6ST heterodimers or homodimers. Signaling requires the transcription factors STAT1 and STAT4, which form a unique heterodimer that binds to distinct DNA sites. The chain is Interleukin-12 subunit alpha (IL12A) from Felis catus (Cat).